Reading from the N-terminus, the 171-residue chain is 3-hydroxydecanoyl-[acyl-carrier-protein] dehydratase (171 aa).

His-70 is a catalytic residue.

Belongs to the thioester dehydratase family. FabA subfamily. As to quaternary structure, homodimer.

It is found in the cytoplasm. It carries out the reaction a (3R)-hydroxyacyl-[ACP] = a (2E)-enoyl-[ACP] + H2O. It catalyses the reaction (3R)-hydroxydecanoyl-[ACP] = (2E)-decenoyl-[ACP] + H2O. The enzyme catalyses (2E)-decenoyl-[ACP] = (3Z)-decenoyl-[ACP]. The protein operates within lipid metabolism; fatty acid biosynthesis. Its function is as follows. Necessary for the introduction of cis unsaturation into fatty acids. Catalyzes the dehydration of (3R)-3-hydroxydecanoyl-ACP to E-(2)-decenoyl-ACP and then its isomerization to Z-(3)-decenoyl-ACP. Can catalyze the dehydratase reaction for beta-hydroxyacyl-ACPs with saturated chain lengths up to 16:0, being most active on intermediate chain length. In Xanthomonas campestris pv. campestris (strain 8004), this protein is 3-hydroxydecanoyl-[acyl-carrier-protein] dehydratase.